Consider the following 214-residue polypeptide: ATP-dependent Clp protease proteolytic subunit (214 aa).

The active-site Nucleophile is the Ser-113. Residue His-138 is part of the active site.

The protein belongs to the peptidase S14 family. In terms of assembly, fourteen ClpP subunits assemble into 2 heptameric rings which stack back to back to give a disk-like structure with a central cavity, resembling the structure of eukaryotic proteasomes.

It is found in the cytoplasm. The catalysed reaction is Hydrolysis of proteins to small peptides in the presence of ATP and magnesium. alpha-casein is the usual test substrate. In the absence of ATP, only oligopeptides shorter than five residues are hydrolyzed (such as succinyl-Leu-Tyr-|-NHMec, and Leu-Tyr-Leu-|-Tyr-Trp, in which cleavage of the -Tyr-|-Leu- and -Tyr-|-Trp bonds also occurs).. Cleaves peptides in various proteins in a process that requires ATP hydrolysis. Has a chymotrypsin-like activity. Plays a major role in the degradation of misfolded proteins. The chain is ATP-dependent Clp protease proteolytic subunit from Alkalilimnicola ehrlichii (strain ATCC BAA-1101 / DSM 17681 / MLHE-1).